The chain runs to 208 residues: MDTFKQISGRIAPMLEPNIDTDVIMPKQFLKGIDRQGLDKGVFFDRRFMAGGQPNPDFILNMPGWQSATFLLVGPNFGCGSSREHAVWGLKQLGVRGLIGSTFAGIFDDNCQRNGILTVSLDEPALARLAQLAASADTNSITVSLDRCEITTAEETISFVISELKRAMLAVGEDAIAWTLQYLPEIENFEVAHYSRRPWLKRPASPLG.

The protein belongs to the LeuD family. LeuD type 1 subfamily. In terms of assembly, heterodimer of LeuC and LeuD.

The catalysed reaction is (2R,3S)-3-isopropylmalate = (2S)-2-isopropylmalate. It participates in amino-acid biosynthesis; L-leucine biosynthesis; L-leucine from 3-methyl-2-oxobutanoate: step 2/4. In terms of biological role, catalyzes the isomerization between 2-isopropylmalate and 3-isopropylmalate, via the formation of 2-isopropylmaleate. This chain is 3-isopropylmalate dehydratase small subunit 2, found in Salmonella choleraesuis (strain SC-B67).